Here is a 232-residue protein sequence, read N- to C-terminus: 7-cyano-7-deazaguanine synthase (232 aa).

13–23 contributes to the ATP binding site; sequence LSGGLDSATVL. Zn(2+)-binding residues include Cys194, Cys204, Cys207, and Cys210.

This sequence belongs to the QueC family. Zn(2+) is required as a cofactor.

The enzyme catalyses 7-carboxy-7-deazaguanine + NH4(+) + ATP = 7-cyano-7-deazaguanine + ADP + phosphate + H2O + H(+). Its pathway is purine metabolism; 7-cyano-7-deazaguanine biosynthesis. Its function is as follows. Catalyzes the ATP-dependent conversion of 7-carboxy-7-deazaguanine (CDG) to 7-cyano-7-deazaguanine (preQ(0)). The sequence is that of 7-cyano-7-deazaguanine synthase from Hydrogenovibrio crunogenus (strain DSM 25203 / XCL-2) (Thiomicrospira crunogena).